Here is a 390-residue protein sequence, read N- to C-terminus: Queuine tRNA-ribosyltransferase (390 aa).

The active-site Proton acceptor is the Asp92. Substrate contacts are provided by residues 92–96 (DSGGF), Asp146, Gln195, and Gly222. Positions 253–259 (GVGTPED) are RNA binding. Residue Asp272 is the Nucleophile of the active site. The interval 277 to 281 (TRNAR) is RNA binding; important for wobble base 34 recognition. Residues Cys310, Cys312, Cys315, and His354 each coordinate Zn(2+).

It belongs to the queuine tRNA-ribosyltransferase family. In terms of assembly, homodimer. Within each dimer, one monomer is responsible for RNA recognition and catalysis, while the other monomer binds to the replacement base PreQ1. The cofactor is Zn(2+).

The catalysed reaction is 7-aminomethyl-7-carbaguanine + guanosine(34) in tRNA = 7-aminomethyl-7-carbaguanosine(34) in tRNA + guanine. The protein operates within tRNA modification; tRNA-queuosine biosynthesis. In terms of biological role, catalyzes the base-exchange of a guanine (G) residue with the queuine precursor 7-aminomethyl-7-deazaguanine (PreQ1) at position 34 (anticodon wobble position) in tRNAs with GU(N) anticodons (tRNA-Asp, -Asn, -His and -Tyr). Catalysis occurs through a double-displacement mechanism. The nucleophile active site attacks the C1' of nucleotide 34 to detach the guanine base from the RNA, forming a covalent enzyme-RNA intermediate. The proton acceptor active site deprotonates the incoming PreQ1, allowing a nucleophilic attack on the C1' of the ribose to form the product. After dissociation, two additional enzymatic reactions on the tRNA convert PreQ1 to queuine (Q), resulting in the hypermodified nucleoside queuosine (7-(((4,5-cis-dihydroxy-2-cyclopenten-1-yl)amino)methyl)-7-deazaguanosine). This is Queuine tRNA-ribosyltransferase from Acidovorax ebreus (strain TPSY) (Diaphorobacter sp. (strain TPSY)).